Consider the following 272-residue polypeptide: Ethanolamine ammonia-lyase small subunit (272 aa).

Positions 161, 182, and 211 each coordinate adenosylcob(III)alamin.

This sequence belongs to the EutC family. As to quaternary structure, the basic unit is a heterodimer which dimerizes to form tetramers. The heterotetramers trimerize; 6 large subunits form a core ring with 6 small subunits projecting outwards. Requires adenosylcob(III)alamin as cofactor.

Its subcellular location is the bacterial microcompartment. The enzyme catalyses ethanolamine = acetaldehyde + NH4(+). It participates in amine and polyamine degradation; ethanolamine degradation. In terms of biological role, catalyzes the deamination of various vicinal amino-alcohols to oxo compounds. Allows this organism to utilize ethanolamine as the sole source of nitrogen and carbon in the presence of external vitamin B12. This is Ethanolamine ammonia-lyase small subunit from Pseudomonas putida (strain ATCC 47054 / DSM 6125 / CFBP 8728 / NCIMB 11950 / KT2440).